We begin with the raw amino-acid sequence, 301 residues long: ATP synthase gamma chain (301 aa).

The protein belongs to the ATPase gamma chain family. In terms of assembly, F-type ATPases have 2 components, CF(1) - the catalytic core - and CF(0) - the membrane proton channel. CF(1) has five subunits: alpha(3), beta(3), gamma(1), delta(1), epsilon(1). CF(0) has three main subunits: a, b and c.

It is found in the cell inner membrane. Its function is as follows. Produces ATP from ADP in the presence of a proton gradient across the membrane. The gamma chain is believed to be important in regulating ATPase activity and the flow of protons through the CF(0) complex. This chain is ATP synthase gamma chain, found in Bordetella petrii (strain ATCC BAA-461 / DSM 12804 / CCUG 43448).